The primary structure comprises 745 residues: 5-methyltetrahydropteroyltriglutamate--homocysteine methyltransferase (745 aa).

5-methyltetrahydropteroyltri-L-glutamate-binding positions include 19 to 22 and Lys119; that span reads RELK. L-homocysteine-binding positions include 418 to 420 and Glu471; that span reads IGS. L-methionine is bound by residues 418 to 420 and Glu471; that span reads IGS. 5-methyltetrahydropteroyltri-L-glutamate is bound by residues 502 to 503 and Trp548; that span reads RC. Asp586 contacts L-homocysteine. An L-methionine-binding site is contributed by Asp586. Residue Glu592 coordinates 5-methyltetrahydropteroyltri-L-glutamate. 3 residues coordinate Zn(2+): His628, Cys630, and Glu652. Residue His681 is the Proton donor of the active site. A Zn(2+)-binding site is contributed by Cys713.

It belongs to the vitamin-B12 independent methionine synthase family. The cofactor is Zn(2+).

It carries out the reaction 5-methyltetrahydropteroyltri-L-glutamate + L-homocysteine = tetrahydropteroyltri-L-glutamate + L-methionine. The protein operates within amino-acid biosynthesis; L-methionine biosynthesis via de novo pathway; L-methionine from L-homocysteine (MetE route): step 1/1. Functionally, catalyzes the transfer of a methyl group from 5-methyltetrahydrofolate to homocysteine resulting in methionine formation. In Corynebacterium glutamicum (strain ATCC 13032 / DSM 20300 / JCM 1318 / BCRC 11384 / CCUG 27702 / LMG 3730 / NBRC 12168 / NCIMB 10025 / NRRL B-2784 / 534), this protein is 5-methyltetrahydropteroyltriglutamate--homocysteine methyltransferase.